The chain runs to 199 residues: NADH-quinone oxidoreductase subunit C (199 aa).

Belongs to the complex I 30 kDa subunit family. As to quaternary structure, NDH-1 is composed of 14 different subunits. Subunits NuoB, C, D, E, F, and G constitute the peripheral sector of the complex.

It is found in the cell inner membrane. It catalyses the reaction a quinone + NADH + 5 H(+)(in) = a quinol + NAD(+) + 4 H(+)(out). Its function is as follows. NDH-1 shuttles electrons from NADH, via FMN and iron-sulfur (Fe-S) centers, to quinones in the respiratory chain. The immediate electron acceptor for the enzyme in this species is believed to be ubiquinone. Couples the redox reaction to proton translocation (for every two electrons transferred, four hydrogen ions are translocated across the cytoplasmic membrane), and thus conserves the redox energy in a proton gradient. The sequence is that of NADH-quinone oxidoreductase subunit C from Paramagnetospirillum magneticum (strain ATCC 700264 / AMB-1) (Magnetospirillum magneticum).